The primary structure comprises 285 residues: Gap junction Cx32.2 protein (285 aa).

The Cytoplasmic segment spans residues 2 to 19; that stretch reads GDLGFLSKLLDQVQSHST. Residues 20–40 form a helical membrane-spanning segment; sequence VIGKIWMTVLFLFRIMVLGAG. Over 41 to 76 the chain is Extracellular; it reads AESVWGDEQSDFTCNTQQPGCENVCYDWTFPISHIR. Residues 77–99 traverse the membrane as a helical segment; it reads FWVLQIIFVSTPTLIYLGHAMHI. Topologically, residues 100-148 are cytoplasmic; it reads IQQETKLRARLSSPGGSRLCKQPKYTNEQGKVKIKGNLLGSYLTQLVFK. The chain crosses the membrane as a helical span at residues 149–171; it reads IIIEAAFIVGQYYLYGFIMVPMF. Residues 172–194 are Extracellular-facing; that stretch reads PCSKKPCPFTVECYMSRPTEKTI. Residues 195–217 traverse the membrane as a helical segment; the sequence is FIIFMLVVACVSLLLNVIEVFYL. Residues 218-285 lie on the Cytoplasmic side of the membrane; it reads ICTRVRCGSR…AKEEKRLLSH (68 aa). The interval 264-285 is disordered; that stretch reads ETSQSIGGSLDGAKEEKRLLSH. Basic and acidic residues predominate over residues 275-285; that stretch reads GAKEEKRLLSH.

This sequence belongs to the connexin family. Beta-type (group I) subfamily. As to quaternary structure, a connexon is composed of a hexamer of connexins.

It is found in the cell membrane. The protein resides in the cell junction. It localises to the gap junction. In terms of biological role, one gap junction consists of a cluster of closely packed pairs of transmembrane channels, the connexons, through which materials of low MW diffuse from one cell to a neighboring cell. May be involved in ovarian follicular maturation. The protein is Gap junction Cx32.2 protein of Micropogonias undulatus (Atlantic croaker).